The following is a 138-amino-acid chain: Transcriptional regulator MraZ (138 aa).

SpoVT-AbrB domains are found at residues 3 to 45 (EFQH…PLAE) and 74 to 117 (ATEC…AAER).

It belongs to the MraZ family. Forms oligomers.

The protein resides in the cytoplasm. The protein localises to the nucleoid. The sequence is that of Transcriptional regulator MraZ from Symbiobacterium thermophilum (strain DSM 24528 / JCM 14929 / IAM 14863 / T).